The following is a 163-amino-acid chain: Nucleotide-binding protein SACE_6882 (163 aa).

It belongs to the YajQ family.

Functionally, nucleotide-binding protein. This is Nucleotide-binding protein SACE_6882 from Saccharopolyspora erythraea (strain ATCC 11635 / DSM 40517 / JCM 4748 / NBRC 13426 / NCIMB 8594 / NRRL 2338).